The primary structure comprises 149 residues: Nascent polypeptide-associated complex subunit beta-2 (149 aa).

Residues 38-103 enclose the NAC-A/B domain; sequence DKDNTKLQAE…PKENTLNGLY (66 aa).

The protein belongs to the NAC-beta family. As to quaternary structure, part of the nascent polypeptide-associated complex (NAC), consisting of EGD2 and either EGD1 or BTT1. NAC associates with ribosomes via EGD1 or BTT1.

It localises to the cytoplasm. Its subcellular location is the nucleus. Acts as a component of the nascent polypeptide-associated complex (NAC), which promotes mitochondrial protein import by enhancing productive ribosome interactions with the outer mitochondrial membrane. Also blocks the inappropriate interaction of ribosomes translating non-secretory nascent polypeptides with translocation sites in the membrane of the endoplasmic reticulum. BTT1 may act as a transcription factor that exert a negative effect on the expression of several genes that are transcribed by RNA polymerase II. The polypeptide is Nascent polypeptide-associated complex subunit beta-2 (BTT1) (Saccharomyces cerevisiae (strain YJM789) (Baker's yeast)).